A 474-amino-acid chain; its full sequence is Vacuolar basic amino acid transporter 2 (474 aa).

The Cytoplasmic portion of the chain corresponds to 1–33; the sequence is MSISNWITTAYLITSTSFQPLYGSFSDALGRRN. Residues 34–54 form a helical membrane-spanning segment; sequence CLFFANGAFTIGCLACGFSKN. At 55 to 62 the chain is on the vacuolar side; the sequence is IYMLSFMR. Residues 63–85 form a helical membrane-spanning segment; the sequence is ALTGIGGGGLITLSTIVNSDVIP. The Cytoplasmic segment spans residues 86-97; sequence SSKRGIFQAFQN. A helical membrane pass occupies residues 98 to 118; it reads LLLGFGAICGASFGGTIASSI. Residues 119–121 lie on the Vacuolar side of the membrane; sequence GWR. The helical transmembrane segment at 122–142 threads the bilayer; sequence WCFLIQVPISVISSILMNYYV. The Cytoplasmic portion of the chain corresponds to 143 to 167; the sequence is PNQKEYNRQNSSIFQNPGKILRDID. A helical transmembrane segment spans residues 168 to 188; it reads VMGSILIITGLTLQLLYLSLG. Over 189–196 the chain is Vacuolar; that stretch reads CSTSKLSW. A helical membrane pass occupies residues 197–217; sequence TSPSVLLLLVGSVIILLLFIL. Over 218–238 the chain is Cytoplasmic; that stretch reads HERKTSARAIIPMELVNSSYS. A helical membrane pass occupies residues 239–259; sequence VVVLSISILVGFASYAYLFTL. At 260 to 273 the chain is on the vacuolar side; that stretch reads PLFFQIVLGDSTAK. A helical membrane pass occupies residues 274 to 294; it reads AGLRLTIPSLFTPVGSLITGF. At 295–303 the chain is on the cytoplasmic side; it reads SMSKYNCLR. A helical membrane pass occupies residues 304 to 324; that stretch reads LLLYIGISLMFLGNFLFLFIE. Over 325–331 the chain is Vacuolar; the sequence is KTSPNWL. The chain crosses the membrane as a helical span at residues 332 to 352; the sequence is IGLFLIPANLGQGITFPTTLF. Residues 353–375 are Cytoplasmic-facing; it reads TFIFMFSKSDQATATSTLYLFRS. The helical transmembrane segment at 376–396 threads the bilayer; the sequence is IGSVWGVAISAGVIQLSFAGL. The Vacuolar segment spans residues 397-447; it reads LRSNLKGLLDENKIKKLIVQLSANSSYIGSLHGEVKNTVIKSFDEATKRAH. N-linked (GlcNAc...) asparagine glycosylation is present at asparagine 420. A helical membrane pass occupies residues 448-468; sequence LMSTLLSSLALILCILKDNLA. Topologically, residues 469 to 474 are cytoplasmic; it reads KPKTRR.

Belongs to the major facilitator superfamily.

It localises to the vacuole membrane. Its function is as follows. Transporter required for vacuolar uptake of histidine, arginine and lysine and to a lesser extent tyrosine. The polypeptide is Vacuolar basic amino acid transporter 2 (VBA2) (Saccharomyces cerevisiae (strain ATCC 204508 / S288c) (Baker's yeast)).